The following is a 1723-amino-acid chain: Lymphocyte antigen 75 (1723 aa).

The signal sequence occupies residues 1–27; that stretch reads MRTGRVTPGLAAGLLLLLLRSFGLVEP. Residues 28 to 1667 are Extracellular-facing; it reads SESSGNDPFT…AVCKIPLSPD (1640 aa). The region spanning 33-182 is the Ricin B-type lectin domain; that stretch reads NDPFTIVHEN…FLIGETWYHD (150 aa). The N-linked (GlcNAc...) asparagine glycan is linked to Asn135. Positions 164–211 constitute a Fibronectin type-II domain; sequence SYGRPCEFPFLIGETWYHDCIHDEDHSGPWCATTLSYEYDQKWGICLL. 4 disulfide bridges follow: Cys169–Cys194, Cys183–Cys209, Cys247–Cys340, and Cys317–Cys332. The region spanning 225-341 is the C-type lectin 1 domain; that stretch reads QIGSCYQFNN…CESQQPYVCK (117 aa). Asn345 and Asn377 each carry an N-linked (GlcNAc...) asparagine glycan. C-type lectin domains lie at 368–486, 493–625, and 652–791; these read NNGF…YVCK, KDAE…ICKK, and SSLS…WVCQ. 2 disulfides stabilise this stretch: Cys389–Cys485 and Cys462–Cys477. N-linked (GlcNAc...) asparagine glycosylation is present at Asn529. Disulfide bonds link Cys597-Cys614, Cys678-Cys790, and Cys752-Cys782. Residues Asn843 and Asn865 are each glycosylated (N-linked (GlcNAc...) asparagine). Position 934 is a phosphotyrosine (Tyr934). Asn935, Asn1077, and Asn1104 each carry an N-linked (GlcNAc...) asparagine glycan. The C-type lectin 5 domain maps to 959–1092; it reads FQNKCFLKVN…ERHSLSLCQK (134 aa). The cysteines at positions 1061 and 1081 are disulfide-linked. The 113-residue stretch at 1111–1223 folds into the C-type lectin 6 domain; sequence YLNNLYKIIS…DNQPGAICYY (113 aa). The cysteines at positions 1198 and 1212 are disulfide-linked. Residues Asn1226, Asn1321, and Asn1393 are each glycosylated (N-linked (GlcNAc...) asparagine). One can recognise a C-type lectin 7 domain in the interval 1252–1375; it reads FQNSCYNFMI…VIEETLHFYQ (124 aa). C-type lectin domains lie at 1402–1514 and 1543–1662; these read YKDG…ICYK and YGGH…VCKI. Cys1489 and Cys1503 form a disulfide bridge. N-linked (GlcNAc...) asparagine glycosylation is found at Asn1594 and Asn1627. Cysteines 1636 and 1651 form a disulfide. Residues 1668 to 1692 traverse the membrane as a helical segment; sequence YTGIAILFAVLCLLGLISLAIWFLL. Residues 1693–1723 are Cytoplasmic-facing; that stretch reads QRSHIRWTGFSSVRYEHGTNEDEVMLPSFHD. Phosphoserine is present on residues Ser1704 and Ser1720.

N-glycosylated. In terms of tissue distribution, expressed in dendritic and thymic epithelial cells and lymph nodes.

The protein localises to the membrane. Acts as an endocytic receptor to direct captured antigens from the extracellular space to a specialized antigen-processing compartment. Causes reduced proliferation of B lymphocytes. This is Lymphocyte antigen 75 (Ly75) from Mus musculus (Mouse).